The sequence spans 435 residues: Enolase (435 aa).

Residue Q163 participates in (2R)-2-phosphoglycerate binding. Catalysis depends on E205, which acts as the Proton donor. Positions 243, 292, and 319 each coordinate Mg(2+). K344, R373, S374, and K395 together coordinate (2R)-2-phosphoglycerate. K344 functions as the Proton acceptor in the catalytic mechanism.

It belongs to the enolase family. The cofactor is Mg(2+).

It is found in the cytoplasm. Its subcellular location is the secreted. The protein localises to the cell surface. It carries out the reaction (2R)-2-phosphoglycerate = phosphoenolpyruvate + H2O. It functions in the pathway carbohydrate degradation; glycolysis; pyruvate from D-glyceraldehyde 3-phosphate: step 4/5. Catalyzes the reversible conversion of 2-phosphoglycerate (2-PG) into phosphoenolpyruvate (PEP). It is essential for the degradation of carbohydrates via glycolysis. In Streptococcus agalactiae serotype Ia (strain ATCC 27591 / A909 / CDC SS700), this protein is Enolase.